We begin with the raw amino-acid sequence, 229 residues long: Sugar fermentation stimulation protein homolog (229 aa).

The protein belongs to the SfsA family.

This chain is Sugar fermentation stimulation protein homolog, found in Carboxydothermus hydrogenoformans (strain ATCC BAA-161 / DSM 6008 / Z-2901).